A 289-amino-acid polypeptide reads, in one-letter code: Spore coat polysaccharide biosynthesis protein SpsD (289 aa).

Residues 137–289 (FELGPPEPGD…YHIWPGKEAK (153 aa)) form the N-acetyltransferase domain.

The protein operates within spore coat biogenesis; spore coat polysaccharide biosynthesis. In Bacillus subtilis (strain 168), this protein is Spore coat polysaccharide biosynthesis protein SpsD (spsD).